The chain runs to 390 residues: S-adenosylmethionine synthase 2 (390 aa).

Residue E9 coordinates Mg(2+). H15 contacts ATP. E43 provides a ligand contact to K(+). 2 residues coordinate L-methionine: E56 and Q99. ATP-binding positions include 167–169, 235–238, D246, 252–253, A269, K273, and K277; these read DGK, SGRF, and RK. D246 contacts L-methionine. K277 provides a ligand contact to L-methionine.

The protein belongs to the AdoMet synthase family. In terms of assembly, homotetramer. Mn(2+) serves as cofactor. It depends on Mg(2+) as a cofactor. Co(2+) is required as a cofactor. Requires K(+) as cofactor.

Its subcellular location is the cytoplasm. The catalysed reaction is L-methionine + ATP + H2O = S-adenosyl-L-methionine + phosphate + diphosphate. It participates in amino-acid biosynthesis; S-adenosyl-L-methionine biosynthesis; S-adenosyl-L-methionine from L-methionine: step 1/1. Its function is as follows. Catalyzes the formation of S-adenosylmethionine from methionine and ATP. The reaction comprises two steps that are both catalyzed by the same enzyme: formation of S-adenosylmethionine (AdoMet) and triphosphate, and subsequent hydrolysis of the triphosphate. This chain is S-adenosylmethionine synthase 2 (METK2), found in Solanum tuberosum (Potato).